We begin with the raw amino-acid sequence, 426 residues long: O-methyltransferase pyvH (426 aa).

S-adenosyl-L-methionine is bound by residues 258 to 259, D281, 308 to 309, and R323; these read GG and DF. The Proton acceptor role is filled by H327.

This sequence belongs to the class I-like SAM-binding methyltransferase superfamily. Cation-independent O-methyltransferase family.

Its pathway is secondary metabolite biosynthesis. In terms of biological role, O-methyltransferase; part of the gene cluster that mediates the biosynthesis of pyranoviolin A, a pyranonigrin analog with a C-3 methoxy group. Initially, the PKS portion of pyvA synthesizes C-10 carbon chain from 5 molecules of malonyl-CoA, which is then condensed with the thiolation (T) domain-bound glycine activated by the adenylation (A) domain. The subsequent chain release by Dieckmann condensation (DKC) could be catalyzed by the TE domain present at the C-terminus of pyvA and/or the alpha/beta hydrolase pyvD, installing the tetramic acid moiety. The FAD-dependent monooxygenase pyvC next epoxidizes one of the olefins of the polyketide part, and the epoxide ring-opening induces the dihydro-gamma-pyrone ring formation. The cytochrome P450 monooxygeanse pyvB would be responsible for the 2 consecutive reactions, in which the dihydro-gamma-pyrone is oxidized to gamma-pyrone and C-7 is hydroxylated to yield pyranonigrin F. Finally, the O-methyltransferase pyvH methylates the C-3 hydroxy group to complete the biosynthesis. The chain is O-methyltransferase pyvH from Aspergillus violaceofuscus (strain CBS 115571).